A 256-amino-acid polypeptide reads, in one-letter code: Stanniocalcin (256 aa).

The first 18 residues, 1–18, serve as a signal peptide directing secretion; that stretch reads MLAKFGLCAVFLVLGTAA. A propeptide spanning residues 19–33 is cleaved from the precursor; sequence TFDTDPEEASPRRAR. Asn62 carries an N-linked (GlcNAc...) asparagine glycan.

This sequence belongs to the stanniocalcin family. Homodimer; disulfide-linked. Produced and secreted by the corpuscles of Stannius.

The protein resides in the secreted. In terms of biological role, its primary function is the prevention of hypercalcemia. Upon release into the circulation, it lowers calcium transport by the gills, thereby reducing its rate of influx from the environment into the extracellular compartment. STC also stimulates phosphate reabsorption by renal proximal tubules. The consequence of this action is increased levels of plasma phosphate, which combines with excess calcium and promotes its disposal into bone and scales. The chain is Stanniocalcin (stc) from Oncorhynchus kisutch (Coho salmon).